Reading from the N-terminus, the 407-residue chain is Myeloid cell nuclear differentiation antigen (407 aa).

One can recognise a Pyrin domain in the interval 1–88; sequence MANEYKKILL…VNNLRKERSK (88 aa). Positions 122-211 are disordered; sequence LTSEVGERIP…TRRNVPQKDP (90 aa). The Nuclear localization signal motif lies at 131-137; the sequence is PVAQKRK. A compositionally biased stretch (low complexity) spans 177-199; the sequence is HTSSSTPSNTSFAQNQQTQAQCQ. The HIN-200 domain maps to 196 to 394; it reads AQCQVDTRRN…CGSHSFIKVI (199 aa).

In terms of assembly, participates in a ternary complex with YY1 and the YY1 target DNA element. Binds nucleolin and nucleophosmin/NPM/B23.

Its subcellular location is the nucleus. It is found in the cytoplasm. Functionally, may act as a transcriptional activator/repressor in the myeloid lineage. Plays a role in the granulocyte/monocyte cell-specific response to interferon. Stimulates the DNA binding of the transcriptional repressor protein YY1. The chain is Myeloid cell nuclear differentiation antigen (MNDA) from Macaca fascicularis (Crab-eating macaque).